Reading from the N-terminus, the 207-residue chain is Nudix hydrolase 4 (207 aa).

Positions 58-194 constitute a Nudix hydrolase domain; sequence GYRQVVGCVP…WMREALEAFI (137 aa). The short motif at 101 to 122 is the Nudix box element; it reads GGWETDESMEEAALRETIEEAG. Mg(2+)-binding residues include E116 and E120.

The protein belongs to the Nudix hydrolase family. Requires Mg(2+) as cofactor. Mn(2+) is required as a cofactor. Expressed in roots, stems and leaves.

It carries out the reaction ADP-D-ribose + H2O = D-ribose 5-phosphate + AMP + 2 H(+). It catalyses the reaction NAD(+) + H2O = beta-nicotinamide D-ribonucleotide + AMP + 2 H(+). The enzyme catalyses NADH + H2O = reduced beta-nicotinamide D-ribonucleotide + AMP + 2 H(+). Its function is as follows. Probably mediates the hydrolysis of some nucleoside diphosphate derivatives. In vitro, it can use both NADH and ADP-ribose as substrates; however the relevance of such substrates in vivo is unclear. This is Nudix hydrolase 4 (NUDT4) from Arabidopsis thaliana (Mouse-ear cress).